Here is a 714-residue protein sequence, read N- to C-terminus: Ribonucleoside-diphosphate reductase 2 subunit alpha (714 aa).

Substrate-binding positions include T161, 177–178 (SC), G206, 386–390 (NLCSE), and 588–592 (PTGSI). A disulfide bridge links C178 with C415. N386 acts as the Proton acceptor in catalysis. The active-site Cysteine radical intermediate is the C388. E390 acts as the Proton acceptor in catalysis.

The protein belongs to the ribonucleoside diphosphate reductase large chain family. In terms of assembly, tetramer of two alpha and two beta subunits.

The catalysed reaction is a 2'-deoxyribonucleoside 5'-diphosphate + [thioredoxin]-disulfide + H2O = a ribonucleoside 5'-diphosphate + [thioredoxin]-dithiol. Under complex allosteric control mediated by deoxynucleoside triphosphates and ATP binding. The type of nucleotide bound at the specificity site determines substrate preference. It seems probable that ATP makes the enzyme reduce CDP and UDP, dGTP favors ADP reduction and dTTP favors GDP reduction. Functionally, provides the precursors necessary for DNA synthesis. Catalyzes the biosynthesis of deoxyribonucleotides from the corresponding ribonucleotides. R1E contains the binding sites for both substrates and allosteric effectors and carries out the actual reduction of the ribonucleotide. The chain is Ribonucleoside-diphosphate reductase 2 subunit alpha (nrdE) from Escherichia coli (strain K12).